Here is a 491-residue protein sequence, read N- to C-terminus: AAA-ATPase At2g46620 (491 aa).

The helical transmembrane segment at 1–21 (MGILWDSFLLLLVSTFALFLV) threads the bilayer. ATP is bound at residue 238–245 (GPSGTGKS). Positions 423-460 (GTGRRLLLENGSRKSTSEDVSDDMSGSLCGGGGGSSPA) are disordered.

Belongs to the AAA ATPase family. BCS1 subfamily. Requires Mg(2+) as cofactor.

The protein localises to the membrane. The catalysed reaction is ATP + H2O = ADP + phosphate + H(+). The sequence is that of AAA-ATPase At2g46620 from Arabidopsis thaliana (Mouse-ear cress).